We begin with the raw amino-acid sequence, 680 residues long: Transketolase 1 (680 aa).

Position 30 (His-30) interacts with substrate. Residues His-69 and 116 to 118 contribute to the thiamine diphosphate site; that span reads GPL. A Mg(2+)-binding site is contributed by Asp-157. 2 residues coordinate thiamine diphosphate: Gly-158 and Asn-187. Asn-187 and Ile-189 together coordinate Mg(2+). Position 263 (His-263) interacts with substrate. Residue His-263 participates in thiamine diphosphate binding. Ser-286 and Ser-335 each carry phosphoserine. Positions 359 and 386 each coordinate substrate. At Ser-402 the chain carries Phosphoserine. 2 residues coordinate thiamine diphosphate: Glu-418 and Phe-445. The active-site Proton donor is the Glu-418. Substrate-binding residues include His-469 and Asp-477. Ser-492 carries the post-translational modification Phosphoserine. Residue Arg-528 participates in substrate binding. Residue Lys-647 forms a Glycyl lysine isopeptide (Lys-Gly) (interchain with G-Cter in ubiquitin) linkage.

This sequence belongs to the transketolase family. Homodimer. Mg(2+) is required as a cofactor. Ca(2+) serves as cofactor. Requires Mn(2+) as cofactor. It depends on Co(2+) as a cofactor. The cofactor is thiamine diphosphate.

The enzyme catalyses D-sedoheptulose 7-phosphate + D-glyceraldehyde 3-phosphate = aldehydo-D-ribose 5-phosphate + D-xylulose 5-phosphate. In terms of biological role, catalyzes the transfer of a two-carbon ketol group from a ketose donor to an aldose acceptor, via a covalent intermediate with the cofactor thiamine pyrophosphate. In Saccharomyces cerevisiae (strain ATCC 204508 / S288c) (Baker's yeast), this protein is Transketolase 1 (TKL1).